A 263-amino-acid polypeptide reads, in one-letter code: 3-methyl-2-oxobutanoate hydroxymethyltransferase (263 aa).

Mg(2+) contacts are provided by D44 and D83. Residues 44–45, D83, and K112 contribute to the 3-methyl-2-oxobutanoate site; that span reads DS. A Mg(2+)-binding site is contributed by E114. E181 (proton acceptor) is an active-site residue.

The protein belongs to the PanB family. In terms of assembly, homodecamer; pentamer of dimers. The cofactor is Mg(2+).

It localises to the cytoplasm. The catalysed reaction is 3-methyl-2-oxobutanoate + (6R)-5,10-methylene-5,6,7,8-tetrahydrofolate + H2O = 2-dehydropantoate + (6S)-5,6,7,8-tetrahydrofolate. Its pathway is cofactor biosynthesis; (R)-pantothenate biosynthesis; (R)-pantoate from 3-methyl-2-oxobutanoate: step 1/2. In terms of biological role, catalyzes the reversible reaction in which hydroxymethyl group from 5,10-methylenetetrahydrofolate is transferred onto alpha-ketoisovalerate to form ketopantoate. This is 3-methyl-2-oxobutanoate hydroxymethyltransferase from Sulfurimonas denitrificans (strain ATCC 33889 / DSM 1251) (Thiomicrospira denitrificans (strain ATCC 33889 / DSM 1251)).